The following is a 132-amino-acid chain: Small ribosomal subunit protein uS8 (132 aa).

The protein belongs to the universal ribosomal protein uS8 family. In terms of assembly, part of the 30S ribosomal subunit. Contacts proteins S5 and S12.

Functionally, one of the primary rRNA binding proteins, it binds directly to 16S rRNA central domain where it helps coordinate assembly of the platform of the 30S subunit. This is Small ribosomal subunit protein uS8 from Bacillus velezensis (strain DSM 23117 / BGSC 10A6 / LMG 26770 / FZB42) (Bacillus amyloliquefaciens subsp. plantarum).